Consider the following 227-residue polypeptide: Pre-hexon-linking protein VIII (227 aa).

Residue T64 is modified to Phosphothreonine; by host. The propeptide occupies 112 to 157 (FRHRVRSPGQGITHLKIRGRGIQLNDESVSSSLGLRPDGTFQIGGA). Phosphoserine; by host occurs at positions 118 and 174.

It belongs to the adenoviridae hexon-linking protein family. Interacts with the peripentonal hexons as well as the hexons in the facets. Part of a complex composed of the core-capsid bridging protein, the endosome lysis protein VI and the hexon-linking protein VIII; these interactions bridge the virus core to the capsid. In terms of processing, cleaved by the viral protease during virion maturation. May cause the middle segment to be shed from the capsid.

The protein localises to the virion. It is found in the host nucleus. Its function is as follows. Structural component of the virion that acts as a cement protein on the capsid interior and which glue the peripentonal hexons and group-of-nine hexons together. This Homo sapiens (Human) protein is Pre-hexon-linking protein VIII.